Reading from the N-terminus, the 831-residue chain is von Willebrand factor A domain-containing protein DDB_G0285981 (831 aa).

Residues 60–188 enclose the VIT domain; that stretch reads RDTFGLKTFS…NVTIHLTIIS (129 aa). The VWFA domain occupies 312–480; sequence EFIFLIDCSG…NFEEQVMKLV (169 aa).

The sequence is that of von Willebrand factor A domain-containing protein DDB_G0285981 from Dictyostelium discoideum (Social amoeba).